The chain runs to 248 residues: tRNA pseudouridine synthase A (248 aa).

The Nucleophile role is filled by Asp53. A substrate-binding site is contributed by Tyr111.

Belongs to the tRNA pseudouridine synthase TruA family. In terms of assembly, homodimer.

The enzyme catalyses uridine(38/39/40) in tRNA = pseudouridine(38/39/40) in tRNA. Functionally, formation of pseudouridine at positions 38, 39 and 40 in the anticodon stem and loop of transfer RNAs. The chain is tRNA pseudouridine synthase A from Streptococcus thermophilus (strain CNRZ 1066).